The primary structure comprises 210 residues: ATP-dependent Clp protease proteolytic subunit 1 (210 aa).

Serine 106 (nucleophile) is an active-site residue. The active site involves histidine 131.

Belongs to the peptidase S14 family. As to quaternary structure, fourteen ClpP subunits assemble into 2 heptameric rings which stack back to back to give a disk-like structure with a central cavity, resembling the structure of eukaryotic proteasomes.

The protein localises to the cytoplasm. It catalyses the reaction Hydrolysis of proteins to small peptides in the presence of ATP and magnesium. alpha-casein is the usual test substrate. In the absence of ATP, only oligopeptides shorter than five residues are hydrolyzed (such as succinyl-Leu-Tyr-|-NHMec, and Leu-Tyr-Leu-|-Tyr-Trp, in which cleavage of the -Tyr-|-Leu- and -Tyr-|-Trp bonds also occurs).. Cleaves peptides in various proteins in a process that requires ATP hydrolysis. Has a chymotrypsin-like activity. Plays a major role in the degradation of misfolded proteins. The chain is ATP-dependent Clp protease proteolytic subunit 1 from Chelativorans sp. (strain BNC1).